Consider the following 210-residue polypeptide: Ribosomal RNA large subunit methyltransferase E (210 aa).

S-adenosyl-L-methionine contacts are provided by G61, W63, D81, D97, and D122. K162 functions as the Proton acceptor in the catalytic mechanism. Basic and acidic residues predominate over residues 187–196 (KPEASRKRSP). The interval 187–210 (KPEASRKRSPEVYALGQGKRAHMK) is disordered.

It belongs to the class I-like SAM-binding methyltransferase superfamily. RNA methyltransferase RlmE family.

Its subcellular location is the cytoplasm. The catalysed reaction is uridine(2552) in 23S rRNA + S-adenosyl-L-methionine = 2'-O-methyluridine(2552) in 23S rRNA + S-adenosyl-L-homocysteine + H(+). In terms of biological role, specifically methylates the uridine in position 2552 of 23S rRNA at the 2'-O position of the ribose in the fully assembled 50S ribosomal subunit. The polypeptide is Ribosomal RNA large subunit methyltransferase E (Stenotrophomonas maltophilia (strain R551-3)).